A 459-amino-acid polypeptide reads, in one-letter code: Bifunctional protein GlmU (459 aa).

Residues 1–229 are pyrophosphorylase; sequence MTNYAIILAA…FDESLGVNDR (229 aa). UDP-N-acetyl-alpha-D-glucosamine-binding positions include 8–11, lysine 22, glutamine 72, and 77–78; these read LAAG and GT. Aspartate 102 is a binding site for Mg(2+). UDP-N-acetyl-alpha-D-glucosamine contacts are provided by glycine 139, glutamate 154, asparagine 169, and asparagine 227. A Mg(2+)-binding site is contributed by asparagine 227. The interval 230–250 is linker; that stretch reads VALAKAEKVMRRRINHAHMVN. The interval 251 to 459 is N-acetyltransferase; the sequence is GVTLTNPAST…KKKPHHPNNK (209 aa). Arginine 332 and lysine 350 together coordinate UDP-N-acetyl-alpha-D-glucosamine. Residue histidine 362 is the Proton acceptor of the active site. Tyrosine 365 and asparagine 376 together coordinate UDP-N-acetyl-alpha-D-glucosamine. Residues alanine 379, 385-386, serine 404, alanine 422, and arginine 439 each bind acetyl-CoA; that span reads NY.

In the N-terminal section; belongs to the N-acetylglucosamine-1-phosphate uridyltransferase family. The protein in the C-terminal section; belongs to the transferase hexapeptide repeat family. As to quaternary structure, homotrimer. Mg(2+) serves as cofactor.

It localises to the cytoplasm. The catalysed reaction is alpha-D-glucosamine 1-phosphate + acetyl-CoA = N-acetyl-alpha-D-glucosamine 1-phosphate + CoA + H(+). The enzyme catalyses N-acetyl-alpha-D-glucosamine 1-phosphate + UTP + H(+) = UDP-N-acetyl-alpha-D-glucosamine + diphosphate. It functions in the pathway nucleotide-sugar biosynthesis; UDP-N-acetyl-alpha-D-glucosamine biosynthesis; N-acetyl-alpha-D-glucosamine 1-phosphate from alpha-D-glucosamine 6-phosphate (route II): step 2/2. The protein operates within nucleotide-sugar biosynthesis; UDP-N-acetyl-alpha-D-glucosamine biosynthesis; UDP-N-acetyl-alpha-D-glucosamine from N-acetyl-alpha-D-glucosamine 1-phosphate: step 1/1. It participates in bacterial outer membrane biogenesis; LPS lipid A biosynthesis. In terms of biological role, catalyzes the last two sequential reactions in the de novo biosynthetic pathway for UDP-N-acetylglucosamine (UDP-GlcNAc). The C-terminal domain catalyzes the transfer of acetyl group from acetyl coenzyme A to glucosamine-1-phosphate (GlcN-1-P) to produce N-acetylglucosamine-1-phosphate (GlcNAc-1-P), which is converted into UDP-GlcNAc by the transfer of uridine 5-monophosphate (from uridine 5-triphosphate), a reaction catalyzed by the N-terminal domain. The chain is Bifunctional protein GlmU from Streptococcus mutans serotype c (strain ATCC 700610 / UA159).